We begin with the raw amino-acid sequence, 470 residues long: Glycine--tRNA ligase (470 aa).

Substrate-binding residues include R94 and E183. ATP-binding positions include 215–217, 225–230, 298–299, and 342–345; these read RNE, FRMVEF, EI, and GCDR. 230 to 234 contacts substrate; the sequence is FEQME. Residue 338–342 participates in substrate binding; the sequence is ETSSG.

This sequence belongs to the class-II aminoacyl-tRNA synthetase family. As to quaternary structure, homodimer.

It localises to the cytoplasm. The enzyme catalyses tRNA(Gly) + glycine + ATP = glycyl-tRNA(Gly) + AMP + diphosphate. Catalyzes the attachment of glycine to tRNA(Gly). The sequence is that of Glycine--tRNA ligase from Chlorobaculum tepidum (strain ATCC 49652 / DSM 12025 / NBRC 103806 / TLS) (Chlorobium tepidum).